The sequence spans 471 residues: UDP-N-acetylmuramoylalanine--D-glutamate ligase (471 aa).

Position 122–128 (122–128 (GSNAKST)) interacts with ATP.

This sequence belongs to the MurCDEF family.

The protein resides in the cytoplasm. The catalysed reaction is UDP-N-acetyl-alpha-D-muramoyl-L-alanine + D-glutamate + ATP = UDP-N-acetyl-alpha-D-muramoyl-L-alanyl-D-glutamate + ADP + phosphate + H(+). Its pathway is cell wall biogenesis; peptidoglycan biosynthesis. Functionally, cell wall formation. Catalyzes the addition of glutamate to the nucleotide precursor UDP-N-acetylmuramoyl-L-alanine (UMA). This Psychrobacter cryohalolentis (strain ATCC BAA-1226 / DSM 17306 / VKM B-2378 / K5) protein is UDP-N-acetylmuramoylalanine--D-glutamate ligase.